A 202-amino-acid polypeptide reads, in one-letter code: Small ribosomal subunit protein uS4 (202 aa).

One can recognise an S4 RNA-binding domain in the interval 91 to 168 (SRLSSILYNS…HKVPDYLEVD (78 aa)).

It belongs to the universal ribosomal protein uS4 family. In terms of assembly, part of the 30S ribosomal subunit. Contacts protein S5. The interaction surface between S4 and S5 is involved in control of translational fidelity.

In terms of biological role, one of the primary rRNA binding proteins, it binds directly to 16S rRNA where it nucleates assembly of the body of the 30S subunit. With S5 and S12 plays an important role in translational accuracy. This Ehrlichia canis (strain Jake) protein is Small ribosomal subunit protein uS4.